We begin with the raw amino-acid sequence, 447 residues long: Asparagine--tRNA ligase (447 aa).

Belongs to the class-II aminoacyl-tRNA synthetase family. Homodimer.

It localises to the cytoplasm. The catalysed reaction is tRNA(Asn) + L-asparagine + ATP = L-asparaginyl-tRNA(Asn) + AMP + diphosphate + H(+). In Streptococcus pneumoniae serotype 4 (strain ATCC BAA-334 / TIGR4), this protein is Asparagine--tRNA ligase.